The following is a 966-amino-acid chain: Leucine--tRNA ligase (966 aa).

Positions 41 to 51 (PYLNGNLHAGH) match the 'HIGH' region motif. Positions 632–636 (KMSKS) match the 'KMSKS' region motif. Lys635 provides a ligand contact to ATP.

This sequence belongs to the class-I aminoacyl-tRNA synthetase family.

It localises to the cytoplasm. It carries out the reaction tRNA(Leu) + L-leucine + ATP = L-leucyl-tRNA(Leu) + AMP + diphosphate. The sequence is that of Leucine--tRNA ligase from Methanosarcina mazei (strain ATCC BAA-159 / DSM 3647 / Goe1 / Go1 / JCM 11833 / OCM 88) (Methanosarcina frisia).